The following is a 767-amino-acid chain: Cap-specific mRNA (nucleoside-2'-O-)-methyltransferase 2 (767 aa).

One can recognise an Adrift-type SAM-dependent 2'-O-MTase domain in the interval 109–322 (ELCTQAWCKF…VYVVCLRYKG (214 aa)). Residue lysine 117 is part of the active site. Residues glycine 148, tryptophan 167, and aspartate 235 each contribute to the S-adenosyl-L-methionine site. Aspartate 235 is a catalytic residue. The active-site Proton acceptor is lysine 275.

It is found in the nucleus. Its subcellular location is the cytoplasm. It catalyses the reaction a 5'-end (N(7)-methyl 5'-triphosphoguanosine)-(2'-O-methyl-ribonucleoside)-(ribonucleotide) in mRNA + S-adenosyl-L-methionine = a 5'-end (N(7)-methyl 5'-triphosphoguanosine)-(2'-O-methyl-ribonucleoside)-(2'-O-methyl-ribonucleotide) in mRNA + S-adenosyl-L-homocysteine + H(+). In terms of biological role, S-adenosyl-L-methionine-dependent methyltransferase that mediates mRNA cap2 2'-O-ribose methylation to the 5'-cap structure of mRNAs. Methylates the ribose of the second nucleotide of a m(7)GpppG-capped mRNA and small nuclear RNA (snRNA) (cap0) to produce m(7)GpppRmpNm (cap2). Recognizes a guanosine cap on RNA independently of its N(7) methylation status. Display cap2 methylation on both cap0 and cap1. Displays a preference for cap1 RNAs. This chain is Cap-specific mRNA (nucleoside-2'-O-)-methyltransferase 2 (Cmtr2), found in Mus musculus (Mouse).